The chain runs to 494 residues: Probable cytochrome P450 313a4 (494 aa).

Heme is bound at residue Cys440.

This sequence belongs to the cytochrome P450 family. Heme serves as cofactor.

The protein resides in the endoplasmic reticulum membrane. The protein localises to the microsome membrane. In terms of biological role, may be involved in the metabolism of insect hormones and in the breakdown of synthetic insecticides. The polypeptide is Probable cytochrome P450 313a4 (Cyp313a4) (Drosophila melanogaster (Fruit fly)).